We begin with the raw amino-acid sequence, 101 residues long: Small ribosomal subunit protein uS14 (101 aa).

The disordered stretch occupies residues 44-74 (ASRKLSRLPRDSSPVRLRNRDQVDGRPRGYV). Basic and acidic residues predominate over residues 61–70 (RNRDQVDGRP).

Belongs to the universal ribosomal protein uS14 family. As to quaternary structure, part of the 30S ribosomal subunit. Contacts proteins S3 and S10.

In terms of biological role, binds 16S rRNA, required for the assembly of 30S particles and may also be responsible for determining the conformation of the 16S rRNA at the A site. The sequence is that of Small ribosomal subunit protein uS14 from Cutibacterium acnes (strain DSM 16379 / KPA171202) (Propionibacterium acnes).